Here is a 516-residue protein sequence, read N- to C-terminus: L-amino-acid oxidase (516 aa).

Residues 1-18 (MNVFFMFSLLFLAALGSC) form the signal peptide. An intrachain disulfide couples C28 to C189. Residues 61–62 (MA), 81–82 (EA), R89, and 103–106 (GPMR) contribute to the FAD site. Substrate is bound by residues R106 and H239. V279 is a binding site for FAD. C349 and C430 are joined by a disulfide. N379 is a glycosylation site (N-linked (GlcNAc...) asparagine). Y390 is a binding site for substrate. FAD contacts are provided by residues E475 and 482-487 (GWIDST). 482–483 (GW) is a substrate binding site.

The protein belongs to the flavin monoamine oxidase family. FIG1 subfamily. As to quaternary structure, homodimer; non-covalently linked. FAD serves as cofactor. In terms of processing, N-glycosylated. As to expression, expressed by the venom gland.

The protein resides in the secreted. The enzyme catalyses an L-alpha-amino acid + O2 + H2O = a 2-oxocarboxylate + H2O2 + NH4(+). It catalyses the reaction L-leucine + O2 + H2O = 4-methyl-2-oxopentanoate + H2O2 + NH4(+). It carries out the reaction L-phenylalanine + O2 + H2O = 3-phenylpyruvate + H2O2 + NH4(+). The catalysed reaction is L-methionine + O2 + H2O = 4-methylsulfanyl-2-oxobutanoate + H2O2 + NH4(+). The enzyme catalyses L-arginine + O2 + H2O = 5-guanidino-2-oxopentanoate + H2O2 + NH4(+). Functionally, catalyzes an oxidative deamination of predominantly hydrophobic and aromatic L-amino acids, thus producing hydrogen peroxide that may contribute to the diverse toxic effects of this enzyme. Is active on L-Arg, L-Phe, L-Met, and L-Leu and is weakly active on L-Val. Exhibits diverse biological activities, such as hemorrhage, hemolysis, edema, apoptosis of vascular endothelial cells or tumor cell lines, antibacterial and antiparasitic activities, as well as regulation of platelet aggregation. Its effect on platelets is controversial, since it either induces aggregation or inhibits agonist-induced aggregation. These different effects are probably due to different experimental conditions. The sequence is that of L-amino-acid oxidase from Crotalus adamanteus (Eastern diamondback rattlesnake).